The primary structure comprises 280 residues: Beta carbonic anhydrase 4 (280 aa).

Position 2 is an N-acetylalanine (Ala2). A coiled-coil region spans residues 47–76 (NVAAAKIKALTAELKELDSSNSDAIERIKT). Thr57 carries the phosphothreonine modification. Phosphoserine is present on Ser117. Residue Cys223 is modified to S-nitrosocysteine.

Belongs to the beta-class carbonic anhydrase family. In terms of assembly, interacts with DTX56. In terms of tissue distribution, strongly expressed in aerial tissues including leaves, stems, flowers and siliques. Accumulates in both guard cells and mesophyll cells.

The protein localises to the cell membrane. It catalyses the reaction hydrogencarbonate + H(+) = CO2 + H2O. Reversible hydration of carbon dioxide. Together with BCA1, involved in the CO(2) signaling pathway which controls gas-exchange between plants and the atmosphere by modulating stomatal development and movements. Promotes water use efficiency. This is Beta carbonic anhydrase 4 from Arabidopsis thaliana (Mouse-ear cress).